The primary structure comprises 158 residues: Dysbindin domain-containing protein 1 (158 aa).

A disordered region spans residues 1 to 38 (MEPSEGASPGGLVKEVDMPQAALSAPVPVTGTSGQSPM). 2 positions are modified to phosphoserine: S95 and S119. A disordered region spans residues 96–158 (DDENVASDSH…ILTVERPKED (63 aa)). Positions 125–141 (TRAEQNREKQPFGDPER) are enriched in basic and acidic residues.

The protein belongs to the dysbindin family.

This Bos taurus (Bovine) protein is Dysbindin domain-containing protein 1 (DBNDD1).